Consider the following 210-residue polypeptide: Large ribosomal subunit protein uL4 (210 aa).

The interval 46 to 85 is disordered; sequence QGTASTLTRSEVRGGGRKPYKQKGTGRARQGSIRTPLRPG. Basic residues predominate over residues 60–71; sequence GGRKPYKQKGTG.

This sequence belongs to the universal ribosomal protein uL4 family. Part of the 50S ribosomal subunit.

In terms of biological role, one of the primary rRNA binding proteins, this protein initially binds near the 5'-end of the 23S rRNA. It is important during the early stages of 50S assembly. It makes multiple contacts with different domains of the 23S rRNA in the assembled 50S subunit and ribosome. Functionally, forms part of the polypeptide exit tunnel. The polypeptide is Large ribosomal subunit protein uL4 (Prochlorococcus marinus (strain AS9601)).